Here is a 122-residue protein sequence, read N- to C-terminus: Large ribosomal subunit protein uL14 (122 aa).

Belongs to the universal ribosomal protein uL14 family. As to quaternary structure, part of the 50S ribosomal subunit. Forms a cluster with proteins L3 and L19. In the 70S ribosome, L14 and L19 interact and together make contacts with the 16S rRNA in bridges B5 and B8.

In terms of biological role, binds to 23S rRNA. Forms part of two intersubunit bridges in the 70S ribosome. The polypeptide is Large ribosomal subunit protein uL14 (Mycolicibacterium smegmatis (strain ATCC 700084 / mc(2)155) (Mycobacterium smegmatis)).